We begin with the raw amino-acid sequence, 216 residues long: Pyrophosphatase PpaX (216 aa).

Asp-9 serves as the catalytic Nucleophile.

It belongs to the HAD-like hydrolase superfamily. PpaX family. Mg(2+) is required as a cofactor.

The catalysed reaction is diphosphate + H2O = 2 phosphate + H(+). In terms of biological role, hydrolyzes pyrophosphate formed during P-Ser-HPr dephosphorylation by HPrK/P. Might play a role in controlling the intracellular pyrophosphate pool. This Bacillus cereus (strain Q1) protein is Pyrophosphatase PpaX.